Reading from the N-terminus, the 633-residue chain is Shootin-1 (633 aa).

Position 1 is an N-acetylmethionine (methionine 1). Serine 3 and serine 4 each carry phosphoserine. The stretch at 7–353 (EKQLQLITSL…RVNQSENSVP (347 aa)) forms a coiled coil. Residues serine 101 and serine 249 each carry the phosphoserine; by PAK1 modification. The segment at 343 to 508 (KRVNQSENSV…LATSESKSMP (166 aa)) is disordered. The span at 352–369 (VPPPPPPPPPLPPPPPNP) shows a compositional bias: pro residues. Position 375 is a phosphoserine (serine 375). Residues 403-418 (TDLKRQAVEEMMDRIK) are compositionally biased toward basic and acidic residues. The span at 456–465 (LNKSTSSRSL) shows a compositional bias: polar residues. The residue at position 473 (serine 473) is a Phosphoserine. Phosphothreonine is present on threonine 487. Polar residues predominate over residues 490–505 (ADSSSPTGILATSESK). Serine 494 is modified (phosphoserine). Threonine 496 is modified (phosphothreonine). 2 positions are modified to phosphoserine: serine 506 and serine 515. A disordered region spans residues 525–633 (TLEAEFNNPC…KTGETDSSNC (109 aa)). Threonine 537 bears the Phosphothreonine mark. Over residues 550-559 (CTNSKVTFQP) the composition is skewed to polar residues. The segment covering 590 to 621 (PQTKDQAAEKDPTQCKEEERGETQPEFKEDSS) has biased composition (basic and acidic residues).

The protein belongs to the shootin family. Interacts with PFN2. Interacts (via N-terminus) with KIF20B; this interaction is direct and promotes the association of SHTN1 to microtubules in primary neurons. Associates with microtubule. Interacts with L1CAM; this interaction occurs in axonal growth cones. Interacts with actin filament retrograde flow; this interaction is enhanced in a netrin-1- and PAK1-dependent manner and promotes F-actin-substrate coupling and concomitant formation of traction forces at axonal growth cones. Interacts with RUFY3. In terms of processing, phosphorylated on Ser-101 and Ser-249 by PAK1 through a CDC42- and RAC1-dependent signaling pathway, which enhances its association with F-actin retrograde flow in filopodia and lamellipodia of axonal growth cones. Phosphorylation on Ser-101 and Ser-249 is increased by netrin-1. Brain-specific (at protein level). Expressed in hippocampal neurons.

The protein localises to the perikaryon. It localises to the cell projection. It is found in the axon. The protein resides in the growth cone. Its subcellular location is the cytoplasm. The protein localises to the cytoskeleton. It localises to the filopodium. It is found in the lamellipodium. In terms of biological role, involved in the generation of internal asymmetric signals required for neuronal polarization and neurite outgrowth. Mediates netrin-1-induced F-actin-substrate coupling or 'clutch engagement' within the axon growth cone through activation of CDC42, RAC1 and PAK1-dependent signaling pathway, thereby converting the F-actin retrograde flow into traction forces, concomitantly with filopodium extension and axon outgrowth. Plays a role in cytoskeletal organization by regulating the subcellular localization of phosphoinositide 3-kinase (PI3K) activity at the axonal growth cone. Also plays a role in regenerative neurite outgrowth. In the developing cortex, cooperates with KIF20B to promote both the transition from the multipolar to the bipolar stage and the radial migration of cortical neurons from the ventricular zone toward the superficial layer of the neocortex. Involved in the accumulation of phosphatidylinositol 3,4,5-trisphosphate (PIP3) in the growth cone of primary hippocampal neurons. This chain is Shootin-1, found in Rattus norvegicus (Rat).